The following is a 259-amino-acid chain: Bisphosphoglycerate mutase (259 aa).

S2 carries the post-translational modification N-acetylserine. Substrate contacts are provided by residues 10–17, 23–24, R62, 89–92, R100, and 116–117; these read RHGEGAWN, CS, ERHY, and RR. H11 serves as the catalytic Tele-phosphohistidine intermediate. E89 (proton donor/acceptor) is an active-site residue. Phosphothreonine is present on T122. 189 to 190 serves as a coordination point for substrate; the sequence is GN.

This sequence belongs to the phosphoglycerate mutase family. BPG-dependent PGAM subfamily. Homodimer. Expressed in red blood cells.

It carries out the reaction (2R)-3-phospho-glyceroyl phosphate = (2R)-2,3-bisphosphoglycerate + H(+). The catalysed reaction is (2R)-2-phosphoglycerate = (2R)-3-phosphoglycerate. With respect to regulation, at alkaline pH BPGM favors the synthase reaction; however, at lower pH the phosphatase reaction is dominant. Inhibited by citrate. Functionally, plays a major role in regulating hemoglobin oxygen affinity by controlling the levels of its allosteric effector 2,3-bisphosphoglycerate (2,3-BPG). Also exhibits mutase (EC 5.4.2.11) activity. The protein is Bisphosphoglycerate mutase (BPGM) of Oryctolagus cuniculus (Rabbit).